The chain runs to 825 residues: Outer dense fiber protein 2 (825 aa).

A phosphoserine mark is found at Val-22, Lys-37, Ser-68, and Ser-69. A disordered region spans residues 27–46 (LPKPSAASSQKSHKRGMKGD). Thr-87 carries the phosphothreonine modification. Ser-90 carries the post-translational modification Phosphoserine; by TSSK4. 2 positions are modified to phosphoserine: Ser-101 and Ser-104. A Phosphothreonine modification is found at Thr-105. Ser-110 and Ser-124 each carry phosphoserine. A Glycyl lysine isopeptide (Lys-Gly) (interchain with G-Cter in SUMO2) cross-link involves residue Lys-133. Ser-134 is modified (phosphoserine). A coiled-coil region spans residues 139 to 212 (QKGERQMAKR…MSKLVEAEMD (74 aa)). Thr-226 is modified (phosphothreonine). Coiled coils occupy residues 240–418 (DINT…AEQL) and 456–793 (EIIV…NYVQ). Phosphoserine is present on residues Ser-256 and Ser-627. The interaction with BBOF1 stretch occupies residues 532–696 (KNYEGMIDNY…EAIHQAQLRL (165 aa)).

This sequence belongs to the ODF2 family. Self-associates. Associates with microtubules and forms a fibrillar structure partially linked to the microtubule network. Interacts through its C-terminus with PLK1. Interacts with ODF1. Interacts with MARK4; the interaction is required for localization of ODF2 to centrioles. Interacts with TSSK4. Interacts with AKNA. Interacts with QRICH2. Interacts with CFAP58. Interacts with BBOF1. Interacts with CCDC38. Interacts with CCDC42. In terms of processing, tyrosine phosphorylated. Phosphorylated on Ser-90 by TSSK4. In terms of tissue distribution, testis-specific. Expressed in the proximal compartment of the elongated spermatid tail; later expression progresses to the distal spermatid tail compartment located in the lumen of the seminiferous epithelium. In spermatids (stages II-III) expression of the tails peaks and remains strong during the remaining steps of spermiogenesis (at protein level). Expression correlates with the onset of spermatogenesis and is first detected at 30 days. Higher expression is seen in testis of 40-day-old and adults that are older than 50 days. No expression is seen in 10- and 20-day-old testes.

It is found in the cytoplasm. The protein resides in the cytoskeleton. Its subcellular location is the microtubule organizing center. It localises to the centrosome. The protein localises to the cell projection. It is found in the cilium. The protein resides in the centriole. Its subcellular location is the spindle pole. It localises to the flagellum. In terms of biological role, seems to be a major component of sperm tail outer dense fibers (ODF). ODFs are filamentous structures located on the outside of the axoneme in the midpiece and principal piece of the mammalian sperm tail and may help to maintain the passive elastic structures and elastic recoil of the sperm tail. May have a modulating influence on sperm motility. Functions as a general scaffold protein that is specifically localized at the distal/subdistal appendages of mother centrioles. Component of the centrosome matrix required for the localization of PLK1 and NIN to the centrosomes. Required for the formation and/or maintenance of normal CETN1 assembly. This Rattus norvegicus (Rat) protein is Outer dense fiber protein 2 (Odf2).